Here is a 396-residue protein sequence, read N- to C-terminus: Tryptophan synthase beta chain (396 aa).

Lys-86 bears the N6-(pyridoxal phosphate)lysine mark.

Belongs to the TrpB family. In terms of assembly, tetramer of two alpha and two beta chains. Pyridoxal 5'-phosphate serves as cofactor.

It catalyses the reaction (1S,2R)-1-C-(indol-3-yl)glycerol 3-phosphate + L-serine = D-glyceraldehyde 3-phosphate + L-tryptophan + H2O. The protein operates within amino-acid biosynthesis; L-tryptophan biosynthesis; L-tryptophan from chorismate: step 5/5. In terms of biological role, the beta subunit is responsible for the synthesis of L-tryptophan from indole and L-serine. The protein is Tryptophan synthase beta chain of Proteus mirabilis (strain HI4320).